We begin with the raw amino-acid sequence, 101 residues long: Urease subunit beta (101 aa).

This sequence belongs to the urease beta subunit family. Heterotrimer of UreA (gamma), UreB (beta) and UreC (alpha) subunits. Three heterotrimers associate to form the active enzyme.

Its subcellular location is the cytoplasm. It catalyses the reaction urea + 2 H2O + H(+) = hydrogencarbonate + 2 NH4(+). The protein operates within nitrogen metabolism; urea degradation; CO(2) and NH(3) from urea (urease route): step 1/1. This chain is Urease subunit beta, found in Cupriavidus metallidurans (strain ATCC 43123 / DSM 2839 / NBRC 102507 / CH34) (Ralstonia metallidurans).